The following is a 282-amino-acid chain: Inosose isomerase (282 aa).

A divalent metal cation is bound by residues Glu-142, Asp-174, His-200, and Glu-246.

Belongs to the IolI family. The cofactor is a divalent metal cation.

It carries out the reaction scyllo-inosose = scyllo-inosine. Its pathway is polyol metabolism; myo-inositol degradation into acetyl-CoA. Involved in the reversible interconverion of 2-keto-myo-inositol (2KMI, inosose or 2,4,6/3,5-pentahydroxycyclohexanone) to 1-keto-D-chiro-inositol (1KDCI or 2,3,5/4,6-pentahydroxycyclohexanone). The protein is Inosose isomerase (iolI) of Halalkalibacterium halodurans (strain ATCC BAA-125 / DSM 18197 / FERM 7344 / JCM 9153 / C-125) (Bacillus halodurans).